We begin with the raw amino-acid sequence, 313 residues long: Protein FixB (313 aa).

255-283 is an FAD binding site; the sequence is LYLAVGISGQIQHMVGANASQTIFAINKD.

Belongs to the ETF alpha-subunit/FixB family. In terms of assembly, heterodimer of FixA and FixB.

It participates in amine and polyamine metabolism; carnitine metabolism. Required for anaerobic carnitine reduction. May bring reductant to CaiA. This is Protein FixB from Escherichia coli O157:H7.